A 406-amino-acid polypeptide reads, in one-letter code: MKFVDEVSIHVKAGDGGNGLMSFRREKFIEKGGPNGGDGGDGGSIYLEADVNLNTLVDYRYTRRFDAQRGENGGSKDCTGAKGDDLILPVPVGTTVIDANTQEIIGDLTEPGQRLMVAQGGWHGLGNTRFKSSTNRAPRQTTPGKPGEARDLKLELKVLADVGLLGLPNAGKSTFIRAVSAAKPKVADYPFTTLVPNLGVVSVGRYKSFVVADIPGLIEGAAEGAGLGIRFLKHLARTRILLHLVDMAPLDESDPADAAEVIVRELGRFSPALTERERWLVLNKMDQILDPAEREARKQAVIERLGWEGPVYVISALERDGTEALSQDIMRYLDERTLRLEEDPQYAEELAELDRRIEDEARARLQALDDARALRRSGLKNAGAVDDDDFDDEEDDGDGPEIFYVP.

Residues 1 to 159 (MKFVDEVSIH…RDLKLELKVL (159 aa)) enclose the Obg domain. Residues 127–148 (NTRFKSSTNRAPRQTTPGKPGE) form a disordered region. The span at 129-143 (RFKSSTNRAPRQTTP) shows a compositional bias: polar residues. In terms of domain architecture, OBG-type G spans 160-334 (ADVGLLGLPN…LSQDIMRYLD (175 aa)). Residues 166 to 173 (GLPNAGKS), 191 to 195 (FTTLV), 213 to 216 (DIPG), 283 to 286 (NKMD), and 315 to 317 (SAL) contribute to the GTP site. Mg(2+)-binding residues include Ser-173 and Thr-193. The segment at 382-406 (AGAVDDDDFDDEEDDGDGPEIFYVP) is disordered. Residues 385 to 399 (VDDDDFDDEEDDGDG) are compositionally biased toward acidic residues.

Belongs to the TRAFAC class OBG-HflX-like GTPase superfamily. OBG GTPase family. Monomer. Requires Mg(2+) as cofactor.

The protein resides in the cytoplasm. Functionally, an essential GTPase which binds GTP, GDP and possibly (p)ppGpp with moderate affinity, with high nucleotide exchange rates and a fairly low GTP hydrolysis rate. Plays a role in control of the cell cycle, stress response, ribosome biogenesis and in those bacteria that undergo differentiation, in morphogenesis control. In Pseudomonas aeruginosa (strain LESB58), this protein is GTPase Obg.